The following is a 508-amino-acid chain: Replication factor C large subunit (508 aa).

ATP is bound at residue 43–50; that stretch reads GSPGIGKT. The tract at residues 425–508 is disordered; sequence AVEHSGGVFE…DQQSGLSDFM (84 aa). Acidic residues-rich tracts occupy residues 443–461 and 483–500; these read GDSD…EESG and TTDD…DDDQ.

This sequence belongs to the activator 1 small subunits family. RfcL subfamily. In terms of assembly, heteromultimer composed of small subunits (RfcS) and large subunits (RfcL).

Functionally, part of the RFC clamp loader complex which loads the PCNA sliding clamp onto DNA. The chain is Replication factor C large subunit from Haloarcula marismortui (strain ATCC 43049 / DSM 3752 / JCM 8966 / VKM B-1809) (Halobacterium marismortui).